The following is a 115-amino-acid chain: uncharacterized protein (115 aa).

Positions 1–115 (MGETWFLTPN…ARSPERTPSP (115 aa)) are disordered. A compositionally biased stretch (polar residues) spans 7 to 17 (LTPNGQSSPGS). Low complexity-rich tracts occupy residues 60-70 (ASCAPRATPRR) and 91-107 (SASA…WPAR).

This is an uncharacterized protein from Human adenovirus C serotype 2 (HAdV-2).